The primary structure comprises 780 residues: Ino eighty subunit 1 (780 aa).

Disordered stretches follow at residues methionine 1–histidine 25 and alanine 563–asparagine 780. Basic and acidic residues predominate over residues alanine 563–alanine 584. Basic residues predominate over residues serine 600 to alanine 613. Residues arginine 614 to serine 635 are compositionally biased toward low complexity. Composition is skewed to acidic residues over residues leucine 676–aspartate 686 and aspartate 723–aspartate 751.

Component of the chromatin-remodeling INO80 complex.

It localises to the nucleus. Its function is as follows. Probably involved in transcription regulation via its interaction with the INO80 complex, a chromatin-remodeling complex. The sequence is that of Ino eighty subunit 1 from Emericella nidulans (strain FGSC A4 / ATCC 38163 / CBS 112.46 / NRRL 194 / M139) (Aspergillus nidulans).